The following is a 610-amino-acid chain: MKNLVSNLRFFSSYSSSIVPRCSNIPKPILNPLYNLLPQSQNPSKIVDVICSTLNHSDYSVLLPNLRDEVKSLIPHLGYPEISRVLLRFQSDASRAITFFKWVKFDLGKRPNVGNYCLLLHILVSSKKFPLAMQFLCELIELTSKKEEVDVFRVLVSATDECNWDPVVFDMLVKGYLKLGLVEEGFRVFREVLDSGFSVSVVTCNHLLNGLLKLDLMEDCWQVYSVMCRVGIHPNTYTFNILTNVFCNDSNFREVDDFLEKMEEEGFEPDLVTYNTLVSSYCRRGRLKEAFYLYKIMYRRRVVPDLVTYTSLIKGLCKDGRVREAHQTFHRMVDRGIKPDCMSYNTLIYAYCKEGMMQQSKKLLHEMLGNSVVPDRFTCKVIVEGFVREGRLLSAVNFVVELRRLKVDIPFEVCDFLIVSLCQEGKPFAAKHLLDRIIEEEGHEAKPETYNNLIESLSRCDAIEEALVLKGKLKNQNQVLDAKTYRALIGCLCRIGRNREAESLMAEMFDSEVKPDSFICGALVYGYCKELDFDKAERLLSLFAMEFRIFDPESYNSLVKAVCETGCGYKKALELQERMQRLGFVPNRLTCKYLIQVLEQPSLPNHLPEN.

PPR repeat units follow at residues 165–199 (DPVVFDMLVKGYLKLGLVEEGFRVFREVLDSGFSV), 200–234 (SVVTCNHLLNGLLKLDLMEDCWQVYSVMCRVGIHP), 235–269 (NTYTFNILTNVFCNDSNFREVDDFLEKMEEEGFEP), 270–304 (DLVTYNTLVSSYCRRGRLKEAFYLYKIMYRRRVVP), 305–339 (DLVTYTSLIKGLCKDGRVREAHQTFHRMVDRGIKP), 340–374 (DCMSYNTLIYAYCKEGMMQQSKKLLHEMLGNSVVP), 375–409 (DRFTCKVIVEGFVREGRLLSAVNFVVELRRLKVDI), 410–445 (PFEVCDFLIVSLCQEGKPFAAKHLLDRIIEEEGHEA), 446–480 (KPETYNNLIESLSRCDAIEEALVLKGKLKNQNQVL), 481–515 (DAKTYRALIGCLCRIGRNREAESLMAEMFDSEVKP), 516–546 (DSFICGALVYGYCKELDFDKAERLLSLFAME), and 551–586 (DPESYNSLVKAVCETGCGYKKALELQERMQRLGFVP).

This sequence belongs to the PPR family. P subfamily.

The sequence is that of Pentatricopeptide repeat-containing protein At5g40400 from Arabidopsis thaliana (Mouse-ear cress).